We begin with the raw amino-acid sequence, 395 residues long: Tryptophan synthase beta chain (395 aa).

N6-(pyridoxal phosphate)lysine is present on lysine 86.

Belongs to the TrpB family. As to quaternary structure, tetramer of two alpha and two beta chains. Requires pyridoxal 5'-phosphate as cofactor.

The enzyme catalyses (1S,2R)-1-C-(indol-3-yl)glycerol 3-phosphate + L-serine = D-glyceraldehyde 3-phosphate + L-tryptophan + H2O. It functions in the pathway amino-acid biosynthesis; L-tryptophan biosynthesis; L-tryptophan from chorismate: step 5/5. The beta subunit is responsible for the synthesis of L-tryptophan from indole and L-serine. The protein is Tryptophan synthase beta chain of Psychromonas ingrahamii (strain DSM 17664 / CCUG 51855 / 37).